The following is a 351-amino-acid chain: Photosystem II D2 protein (351 aa).

The helical transmembrane segment at 39–59 threads the bilayer; it reads TAYLSIGGWLTGTTFVTSWYT. Residue His-116 participates in chlorophyll a binding. Residues 123-139 form a helical membrane-spanning segment; sequence GFMLRQFEIARLVGIRP. Pheophytin a is bound by residues Gln-128 and Asn-141. The chain crosses the membrane as a helical span at residues 151–164; the sequence is VFVSVFLMYPLGQS. Position 196 (His-196) interacts with chlorophyll a. Residues 206-226 traverse the membrane as a helical segment; the sequence is GALLCAIHGATVENTLFEDGE. Residues His-213 and Phe-260 each contribute to the a plastoquinone site. His-213 contacts Fe cation. His-267 serves as a coordination point for Fe cation. The chain crosses the membrane as a helical span at residues 277-293; that stretch reads GLWTSAIGIIGLALNLR.

This sequence belongs to the reaction center PufL/M/PsbA/D family. In terms of assembly, PSII is composed of 1 copy each of membrane proteins PsbA, PsbB, PsbC, PsbD, PsbE, PsbF, PsbH, PsbI, PsbJ, PsbK, PsbL, PsbM, PsbT, PsbX, PsbY, PsbZ, Psb30/Ycf12, peripheral proteins PsbO, CyanoQ (PsbQ), PsbU, PsbV and a large number of cofactors. It forms dimeric complexes. It depends on The D1/D2 heterodimer binds P680, chlorophylls that are the primary electron donor of PSII, and subsequent electron acceptors. It shares a non-heme iron and each subunit binds pheophytin, quinone, additional chlorophylls, carotenoids and lipids. There is also a Cl(-1) ion associated with D1 and D2, which is required for oxygen evolution. The PSII complex binds additional chlorophylls, carotenoids and specific lipids. as a cofactor.

It localises to the cellular thylakoid membrane. It carries out the reaction 2 a plastoquinone + 4 hnu + 2 H2O = 2 a plastoquinol + O2. Photosystem II (PSII) is a light-driven water:plastoquinone oxidoreductase that uses light energy to abstract electrons from H(2)O, generating O(2) and a proton gradient subsequently used for ATP formation. It consists of a core antenna complex that captures photons, and an electron transfer chain that converts photonic excitation into a charge separation. The D1/D2 (PsbA/PsbD) reaction center heterodimer binds P680, the primary electron donor of PSII as well as several subsequent electron acceptors. D2 is needed for assembly of a stable PSII complex. In Synechococcus sp. (strain CC9311), this protein is Photosystem II D2 protein.